The chain runs to 587 residues: Tectonic-1 (587 aa).

Residues 1–22 (MRPRGLPPLLVVLLGCWASVSA) form the signal peptide. Residue asparagine 36 is glycosylated (N-linked (GlcNAc...) asparagine). Positions 46–68 (GTFPSTRPPGTPRAPGPSSGPRP) are disordered. Over residues 51-68 (TRPPGTPRAPGPSSGPRP) the composition is skewed to pro residues. Asparagine 295 and asparagine 528 each carry an N-linked (GlcNAc...) asparagine glycan.

It belongs to the tectonic family. In terms of assembly, part of the tectonic-like complex (also named B9 complex).

It localises to the cytoplasm. The protein resides in the cytoskeleton. It is found in the cilium basal body. Its subcellular location is the secreted. Component of the tectonic-like complex, a complex localized at the transition zone of primary cilia and acting as a barrier that prevents diffusion of transmembrane proteins between the cilia and plasma membranes. Regulator of Hedgehog (Hh), required for both activation and inhibition of the Hh pathway in the patterning of the neural tube. During neural tube development, it is required for formation of the most ventral cell types and for full Hh pathway activation. Functions in Hh signal transduction to fully activate the pathway in the presence of high Hh levels and to repress the pathway in the absence of Hh signals. Modulates Hh signal transduction downstream of SMO and RAB23. The protein is Tectonic-1 (TCTN1) of Homo sapiens (Human).